The chain runs to 330 residues: Protein IN CHLOROPLAST ATPASE BIOGENESIS, chloroplastic (330 aa).

The N-terminal 35 residues, 1–35, are a transit peptide targeting the chloroplast; the sequence is MGSISMHITPSTALPIRHFRARVSCCSSGHVSFIK.

As to quaternary structure, interacts with ATPC1.

It localises to the plastid. The protein resides in the chloroplast stroma. Its function is as follows. Involved in the assembly of the F(1) ATP synthase in chloroplast thylakoid membranes. Functions downstream of the CPN60 chaperones to promote assembly of the catalytically active core of the chloroplast ATP synthase. Assists the assembly of the ATP synthase gamma subunit into the active F(1) core downstream of CPN60-mediated folding, which is critical for the biogenesis of the chloroplast ATP synthase. This is Protein IN CHLOROPLAST ATPASE BIOGENESIS, chloroplastic from Arabidopsis thaliana (Mouse-ear cress).